We begin with the raw amino-acid sequence, 301 residues long: Troponin T, cardiac muscle (301 aa).

Over residues 1–72 (MSDAEEVVEE…EAKDAEEGPV (72 aa)) the composition is skewed to acidic residues. Disordered stretches follow at residues 1–97 (MSDA…DGER) and 125–224 (NRKK…KKKI). An N-acetylserine modification is found at S2. S2 is subject to Phosphoserine; by CK2. 2 stretches are compositionally biased toward basic and acidic residues: residues 125-186 (NRKK…DEAR) and 206-224 (QTER…KKKI). T207 is modified (phosphothreonine; by PKC/PRKCA). S211 is subject to Phosphoserine; by PKC/PRKCA. T216 carries the phosphothreonine; by PKC/PRKCA and RAF1 modification. At T297 the chain carries Phosphothreonine; by PKC/PRKCA.

Belongs to the troponin T family. Post-translationally, phosphorylation at Thr-216 by PRKCA induces significant reduction in myofilament calcium sensitivity and actomyosin ATPase activity.

Functionally, troponin T is the tropomyosin-binding subunit of troponin, the thin filament regulatory complex which confers calcium-sensitivity to striated muscle actomyosin ATPase activity. This is Troponin T, cardiac muscle (Tnnt2) from Mus musculus (Mouse).